A 198-amino-acid chain; its full sequence is Virion membrane protein A17 precursor homolog (198 aa).

At 1 to 55 the chain is on the virion surface side; the sequence is MDNNYLNYYNVFEEFDAGAGIKEKELFTEEQQLSFLPKKGLGNGGFDGVERLYSN. A helical membrane pass occupies residues 56-76; sequence IINNNDIKSLLALIMLVFAIN. At 77–145 the chain is on the intravirion side; sequence TNSLVALIFI…TSKISKGFKR (69 aa). Residues 146 to 166 traverse the membrane as a helical segment; it reads AIDVVLLVILGFYIVKIYGID. At 167–198 the chain is on the virion surface side; that stretch reads RQISIPSRRYCRQMSGPSSLENLNAFQTHSNY. Position 198 is a phosphotyrosine (Y198).

It belongs to the chordopoxvirinae A17 family. In terms of assembly, interacts (via N-terminus) with D13 scaffold; this interaction helps D13 to associate with membranes. Interacts with A14. Interacts with A27; this interaction allows A27 to be anchored in the mature virion (MV) membrane. Part of a complex composed of A17, A25, A26 and A27. The 22 kDa precursor is probably cleaved by the I7 protease during virus maturation. In terms of processing, phosphorylated on tyrosine and threonine. Its phosphorylation state is regulated by the F10 kinase and the H1 phosphatase. Phosphorylation by F10 kinase seems to be required to form the membranes associated with IV.

Its subcellular location is the virion membrane. In terms of biological role, envelope protein which participates in virus morphogenesis. Needed for an early step in viral crescent membrane formation by interacting with D13 scaffold protein. Its interaction with D13 scaffold protein leads to the formation of rigid, crescent-shaped membranes that assemble around the cytoplasmic virus factory. Membrane anchor for the protein A27. A17-A27 virus envelope protein might be involved in fusion or attachment, and can further associate to A26. The polypeptide is Virion membrane protein A17 precursor homolog (Fowlpox virus (strain NVSL) (FPV)).